The chain runs to 72 residues: Translation initiation factor IF-1 2 (72 aa).

An S1-like domain is found at 1–72; it reads MSKDDVIEVE…TRGRIVYRYK (72 aa).

Belongs to the IF-1 family. Component of the 30S ribosomal translation pre-initiation complex which assembles on the 30S ribosome in the order IF-2 and IF-3, IF-1 and N-formylmethionyl-tRNA(fMet); mRNA recruitment can occur at any time during PIC assembly.

The protein resides in the cytoplasm. One of the essential components for the initiation of protein synthesis. Stabilizes the binding of IF-2 and IF-3 on the 30S subunit to which N-formylmethionyl-tRNA(fMet) subsequently binds. Helps modulate mRNA selection, yielding the 30S pre-initiation complex (PIC). Upon addition of the 50S ribosomal subunit IF-1, IF-2 and IF-3 are released leaving the mature 70S translation initiation complex. The polypeptide is Translation initiation factor IF-1 2 (Symbiobacterium thermophilum (strain DSM 24528 / JCM 14929 / IAM 14863 / T)).